The primary structure comprises 310 residues: UDP-N-acetylenolpyruvoylglucosamine reductase (310 aa).

One can recognise an FAD-binding PCMH-type domain in the interval Val-35 to Ala-199. Arg-179 is an active-site residue. Ser-228 functions as the Proton donor in the catalytic mechanism. Glu-298 is an active-site residue.

The protein belongs to the MurB family. FAD serves as cofactor.

The protein resides in the cytoplasm. The catalysed reaction is UDP-N-acetyl-alpha-D-muramate + NADP(+) = UDP-N-acetyl-3-O-(1-carboxyvinyl)-alpha-D-glucosamine + NADPH + H(+). Its pathway is cell wall biogenesis; peptidoglycan biosynthesis. Cell wall formation. This is UDP-N-acetylenolpyruvoylglucosamine reductase from Rhodopseudomonas palustris (strain BisB5).